A 310-amino-acid chain; its full sequence is ADP-L-glycero-D-manno-heptose-6-epimerase (310 aa).

Residues 10–11, 31–32, Lys38, Lys53, 75–79, and Asn92 each bind NADP(+); these read FI, DN, and EGACS. Catalysis depends on Tyr140, which acts as the Proton acceptor. Position 144 (Lys144) interacts with NADP(+). Asn169 contacts substrate. Val170 and Lys178 together coordinate NADP(+). Lys178 acts as the Proton acceptor in catalysis. Residues Ser180, His187, 201-204, Arg209, and Tyr272 each bind substrate; that span reads FAGS.

It belongs to the NAD(P)-dependent epimerase/dehydratase family. HldD subfamily. Homopentamer. NADP(+) serves as cofactor.

The enzyme catalyses ADP-D-glycero-beta-D-manno-heptose = ADP-L-glycero-beta-D-manno-heptose. It participates in nucleotide-sugar biosynthesis; ADP-L-glycero-beta-D-manno-heptose biosynthesis; ADP-L-glycero-beta-D-manno-heptose from D-glycero-beta-D-manno-heptose 7-phosphate: step 4/4. In terms of biological role, catalyzes the interconversion between ADP-D-glycero-beta-D-manno-heptose and ADP-L-glycero-beta-D-manno-heptose via an epimerization at carbon 6 of the heptose. This is ADP-L-glycero-D-manno-heptose-6-epimerase from Yersinia pseudotuberculosis serotype O:1b (strain IP 31758).